Consider the following 144-residue polypeptide: Large ribosomal subunit protein uL15 (144 aa).

The interval 1–57 is disordered; it reads MKLNDLSPAPGSRREKHRPGRGIGSGLGKTGGRGHKGQSSRSGGTIAPGFEGGQQPL. Over residues 21–31 the composition is skewed to gly residues; the sequence is RGIGSGLGKTG.

This sequence belongs to the universal ribosomal protein uL15 family. Part of the 50S ribosomal subunit.

Its function is as follows. Binds to the 23S rRNA. The chain is Large ribosomal subunit protein uL15 from Pseudomonas savastanoi pv. phaseolicola (strain 1448A / Race 6) (Pseudomonas syringae pv. phaseolicola (strain 1448A / Race 6)).